A 201-amino-acid polypeptide reads, in one-letter code: MSNLVKEKAPVFPISKVKKIAKCDPEYVITSNVAISATAFAAELFVQNLVEESLVLAQLNSKGKTSLRLSLNSIEECVEKRDNFRFLEDAIKQLKKNSALDKKRELNMQPGRSDQEVVIEEPELHEDDGVEEEEEEDEVSEEEEPVHNEELLDDSKDQQNDKSTRSVASLLSRFQYKSALDVGEHSDSSDIEVDHTKSTDP.

Disordered stretches follow at residues 102–165 (KKRE…KSTR) and 178–201 (SALD…STDP). Acidic residues predominate over residues 117 to 144 (VVIEEPELHEDDGVEEEEEEDEVSEEEE). Composition is skewed to basic and acidic residues over residues 145–164 (PVHN…DKST) and 182–201 (VGEH…STDP). S186, S188, and S189 each carry phosphoserine.

In terms of assembly, DNA polymerase epsilon is a heterotetramer consisting of POL2, DPB2, DPB3 and DPB4.

It localises to the nucleus. In terms of biological role, as accessory component of the DNA polymerase epsilon (DNA polymerase II) participates in chromosomal DNA replication. It is required during synthesis of the leading and lagging DNA strands at the replication fork and binds at/or near replication origins and moves along DNA with the replication fork. It has 3'-5' proofreading exonuclease activity that correct errors arising during DNA replication. It is also involved in DNA synthesis during DNA repair. The chain is DNA polymerase epsilon subunit C (DPB3) from Saccharomyces cerevisiae (strain ATCC 204508 / S288c) (Baker's yeast).